The primary structure comprises 102 residues: Small ribosomal subunit protein uS10 (102 aa).

The protein belongs to the universal ribosomal protein uS10 family. As to quaternary structure, part of the 30S ribosomal subunit.

Its function is as follows. Involved in the binding of tRNA to the ribosomes. This Staphylococcus saprophyticus subsp. saprophyticus (strain ATCC 15305 / DSM 20229 / NCIMB 8711 / NCTC 7292 / S-41) protein is Small ribosomal subunit protein uS10.